Here is a 231-residue protein sequence, read N- to C-terminus: Ribose-5-phosphate isomerase A (231 aa).

Substrate contacts are provided by residues 40–43 (TGST), 93–96 (DGAD), and 106–109 (KGGG). The active-site Proton acceptor is Glu115. Residue Lys133 participates in substrate binding.

The protein belongs to the ribose 5-phosphate isomerase family. In terms of assembly, homodimer.

It catalyses the reaction aldehydo-D-ribose 5-phosphate = D-ribulose 5-phosphate. Its pathway is carbohydrate degradation; pentose phosphate pathway; D-ribose 5-phosphate from D-ribulose 5-phosphate (non-oxidative stage): step 1/1. In terms of biological role, catalyzes the reversible conversion of ribose-5-phosphate to ribulose 5-phosphate. The chain is Ribose-5-phosphate isomerase A from Escherichia coli O6:K15:H31 (strain 536 / UPEC).